We begin with the raw amino-acid sequence, 523 residues long: 2-isopropylmalate synthase (523 aa).

One can recognise a Pyruvate carboxyltransferase domain in the interval 5 to 267; that stretch reads VIIFDTTLRD…HTAINHQEIW (263 aa). Positions 14, 202, 204, and 238 each coordinate Mn(2+). Positions 392 to 523 are regulatory domain; that stretch reads RLDYFSVQSG…QHNENNKETV (132 aa).

It belongs to the alpha-IPM synthase/homocitrate synthase family. LeuA type 1 subfamily. Homodimer. Requires Mn(2+) as cofactor.

The protein localises to the cytoplasm. The catalysed reaction is 3-methyl-2-oxobutanoate + acetyl-CoA + H2O = (2S)-2-isopropylmalate + CoA + H(+). It participates in amino-acid biosynthesis; L-leucine biosynthesis; L-leucine from 3-methyl-2-oxobutanoate: step 1/4. In terms of biological role, catalyzes the condensation of the acetyl group of acetyl-CoA with 3-methyl-2-oxobutanoate (2-ketoisovalerate) to form 3-carboxy-3-hydroxy-4-methylpentanoate (2-isopropylmalate). This is 2-isopropylmalate synthase from Escherichia coli O157:H7.